The chain runs to 159 residues: Phosphopantetheine adenylyltransferase (159 aa).

Serine 8 serves as a coordination point for substrate. ATP is bound by residues 8–9 and histidine 16; that span reads SF. Residues lysine 40, threonine 72, and arginine 86 each contribute to the substrate site. ATP contacts are provided by residues 87-89, glutamate 97, and 122-128; these read GLR and HSFVSSS.

Belongs to the bacterial CoaD family. As to quaternary structure, homohexamer. Mg(2+) serves as cofactor.

The protein resides in the cytoplasm. It carries out the reaction (R)-4'-phosphopantetheine + ATP + H(+) = 3'-dephospho-CoA + diphosphate. It functions in the pathway cofactor biosynthesis; coenzyme A biosynthesis; CoA from (R)-pantothenate: step 4/5. Its function is as follows. Reversibly transfers an adenylyl group from ATP to 4'-phosphopantetheine, yielding dephospho-CoA (dPCoA) and pyrophosphate. The sequence is that of Phosphopantetheine adenylyltransferase from Synechococcus sp. (strain JA-3-3Ab) (Cyanobacteria bacterium Yellowstone A-Prime).